Reading from the N-terminus, the 243-residue chain is Fibroblast growth factor 12 (243 aa).

2 disordered regions span residues 1–39 and 216–243; these read MAAA…DGRS and IGEK…QDST. A Bipartite nuclear localization signal motif is present at residues 11 to 38; the sequence is RQKRQARESNSDRVSASKRRSSPSKDGR.

It belongs to the heparin-binding growth factors family. Interacts with the C-terminal region of SCN9A. Brain, eye and testis; highly expressed in embryonic retina, olfactory epithelium, olfactory bulb, and in a segmental pattern of the body wall; in adult olfactory bulb, less in cerebellum, deep cerebellar nuclei, cortex and multiple midbrain structures.

Its subcellular location is the nucleus. Involved in nervous system development and function. Involved in the positive regulation of voltage-gated sodium channel activity. Promotes neuronal excitability by elevating the voltage dependence of neuronal sodium channel SCN8A fast inactivation. The protein is Fibroblast growth factor 12 (FGF12) of Homo sapiens (Human).